The following is a 452-amino-acid chain: 2-succinylbenzoate--CoA ligase (452 aa).

Belongs to the ATP-dependent AMP-binding enzyme family. MenE subfamily.

The enzyme catalyses 2-succinylbenzoate + ATP + CoA = 2-succinylbenzoyl-CoA + AMP + diphosphate. Its pathway is quinol/quinone metabolism; 1,4-dihydroxy-2-naphthoate biosynthesis; 1,4-dihydroxy-2-naphthoate from chorismate: step 5/7. The protein operates within quinol/quinone metabolism; menaquinone biosynthesis. In terms of biological role, converts 2-succinylbenzoate (OSB) to 2-succinylbenzoyl-CoA (OSB-CoA). The polypeptide is 2-succinylbenzoate--CoA ligase (Haemophilus influenzae (strain ATCC 51907 / DSM 11121 / KW20 / Rd)).